A 196-amino-acid chain; its full sequence is Small ribosomal subunit protein uS4c (196 aa).

Positions 17–36 (ALPGLTRKTPKSGSNLKKKF) are disordered. The S4 RNA-binding domain maps to 89–150 (MRLDNILFRL…NQRSKRLIQN (62 aa)).

Belongs to the universal ribosomal protein uS4 family. As to quaternary structure, part of the 30S ribosomal subunit. Contacts protein S5. The interaction surface between S4 and S5 is involved in control of translational fidelity.

It is found in the plastid. The protein localises to the chloroplast. One of the primary rRNA binding proteins, it binds directly to 16S rRNA where it nucleates assembly of the body of the 30S subunit. Its function is as follows. With S5 and S12 plays an important role in translational accuracy. The protein is Small ribosomal subunit protein uS4c (rps4) of Phyllostachys flexuosa (Drooping timber bamboo).